Consider the following 209-residue polypeptide: MSKVYVFDHPLIQHKLTYIRDKHTGTKEFRELVEEVATLMAFEITRDLPLQEVDIETPVSKAKAKVIAGKKLGIIPILRAGIGMVDGILKLIPAAKVGHIGLYRDPETLKPVEYYVKLPTDVEERDFIVVDPMLATGGSAVEAIHALKKRGAKNIKFMCLIAAPEGVEAVQQAHPDVDIYIAALDEKLNDHGYIVPGLGDAGDRLFGTK.

Residues R79, R104, and 131-139 each bind 5-phospho-alpha-D-ribose 1-diphosphate; that span reads DPMLATGGS. Residues I194 and 199-201 contribute to the uracil site; that span reads GDA. D200 lines the 5-phospho-alpha-D-ribose 1-diphosphate pocket.

The protein belongs to the UPRTase family. It depends on Mg(2+) as a cofactor.

It catalyses the reaction UMP + diphosphate = 5-phospho-alpha-D-ribose 1-diphosphate + uracil. It functions in the pathway pyrimidine metabolism; UMP biosynthesis via salvage pathway; UMP from uracil: step 1/1. With respect to regulation, allosterically activated by GTP. Functionally, catalyzes the conversion of uracil and 5-phospho-alpha-D-ribose 1-diphosphate (PRPP) to UMP and diphosphate. This is Uracil phosphoribosyltransferase from Anoxybacillus flavithermus (strain DSM 21510 / WK1).